The primary structure comprises 938 residues: MKFIFYLFSIFCCLCSCAQSQNISGRPDAVRIGAQFARNSTIGRVAAVAVLAAVNDINNDSNILPGTKLDLHMHDSSCNRFLGIVQALQFMEKDTVAIIGPLSSTTAHVLSHLANELHVPLMSFSATDPTLSSLEYPFFVRTTVSDQFQMTAVADLVEYYGWKQVTTIFVDNDYGRNAISSLGDELSKRRSKILYKAPFRPGASNNEIADVLIKVAMMESRVIILHANPDSGLVVFQQALKLGMVSNGYAWIATDWLTSYLDPSVHLDIGLLSTMQGVLTLRHHTENTRRKSMLSSKWSELLKEDSGHSRFLLSTYGLYAYDTVWMLAHALDAFFNSGGNISFSPDPKLNEISGRGLNLEALSVFDGGQLLLEKIHQVDFLGATGPVKFDSGGNLIQPAYDIVSIIGSGLRTVGYWSNYSGLSVISPETLYKKPANRTRETQKLHDVIWPGETINKPRGWVFPNNGNEIKIGVPDRVSYRQFVSVDSETGMVRGLCIDVFVAAINLLAYPVPYRFVPFGNNRENPSYSELINKIITDDFDAVVGDVTIITNRTKVVDFTQPYVSSGLVVLTSVKRQNSGGWAFLQPFTIKMWTVTGLFFLIIGTVVWMLEHRINDEFRGPPAKQLITVFWFSFSTLFFAHREDTRSTLGRFVIIIWLFVVLIIQSSYTASLTSILTVQQLTSPITGIDSLITSDVPIGFQVGSFAENYLAQELGVAHSRLKALGSPEEYKKALDLGPSKGGVAAIVDERPYIELFLYQNPKFAVVGSEFTKSGWGFAFPRDSPLSVDLSTAILELSENGDLQRIHDKWLASDMSSMSQASELDQDPDRLDVYSFSALFLICGLACIFALAIHACNLFYQYSRHAAEEDPAALQPSASDGSRSLSRRSKLQSFLSFADRREADIRRAAKEKASGLGGSGGSMSGVSFTSSGSGSTTASC.

Residues 1–20 (MKFIFYLFSIFCCLCSCAQS) form the signal peptide. Topologically, residues 21–588 (QNISGRPDAV…GGWAFLQPFT (568 aa)) are extracellular. Asn-22, Asn-39, Asn-59, Asn-340, Asn-418, Asn-436, and Asn-551 each carry an N-linked (GlcNAc...) asparagine glycan. Residues 589–609 (IKMWTVTGLFFLIIGTVVWML) form a helical membrane-spanning segment. At 610–618 (EHRINDEFR) the chain is on the cytoplasmic side. The chain crosses the membrane as a helical span at residues 619-639 (GPPAKQLITVFWFSFSTLFFA). Topologically, residues 640-650 (HREDTRSTLGR) are cytoplasmic. A helical membrane pass occupies residues 651 to 671 (FVIIIWLFVVLIIQSSYTASL). Topologically, residues 672–830 (TSILTVQQLT…ELDQDPDRLD (159 aa)) are extracellular. The chain crosses the membrane as a helical span at residues 831–851 (VYSFSALFLICGLACIFALAI). Topologically, residues 852–938 (HACNLFYQYS…SGSGSTTASC (87 aa)) are cytoplasmic. The interval 906–938 (AAKEKASGLGGSGGSMSGVSFTSSGSGSTTASC) is disordered. Residues 922 to 938 (SGVSFTSSGSGSTTASC) show a composition bias toward low complexity.

It belongs to the glutamate-gated ion channel (TC 1.A.10.1) family. In terms of assembly, may form homomultimers. In terms of tissue distribution, expressed at low levels in roots and leaves.

The protein localises to the membrane. Its function is as follows. Glutamate-gated receptor that probably acts as a non-selective cation channel. Involved in root development. May regulate cell proliferation and cell death in the root apex. The sequence is that of Glutamate receptor 3.1 (GLR3.1) from Oryza sativa subsp. japonica (Rice).